The primary structure comprises 318 residues: Protein IMPACT-A (318 aa).

The 103-residue stretch at 14–116 folds into the RWD domain; the sequence is DEVEALTSIY…EKIREFLLGK (103 aa). The segment at 296–318 is disordered; it reads EESSKQTAKSKKVGKECKKKADH. Over residues 308 to 318 the composition is skewed to basic and acidic residues; that stretch reads VGKECKKKADH.

It belongs to the IMPACT family. In terms of assembly, interacts with GCN1; prevents the interaction of GCN1 with EIF2AK4/GCN2 and inhibits EIF2AK4/GCN2 kinase activity. Interaction with RPL39; this interaction occurs in a GCN1-independent manner. Associates with ribosomes; this interaction occurs in a GCN1-independent manner. Associates with actin; this interaction occurs in a GCN1-independent manner.

The protein localises to the cytoplasm. Functionally, translational regulator that ensures constant high levels of translation upon a variety of stress conditions, such as amino acid starvation, UV-C irradiation, proteasome inhibitor treatment and glucose deprivation. Plays a role as a negative regulator of the EIF2AK4/GCN2 kinase activity; impairs GCN1-mediated EIF2AK4/GCN2 activation, and hence EIF2AK4/GCN2-mediated eIF-2-alpha phosphorylation and subsequent down-regulation of protein synthesis. Plays a role in differentiation of neuronal cells by stimulating neurite outgrowth. This chain is Protein IMPACT-A (impact-A), found in Xenopus tropicalis (Western clawed frog).